The sequence spans 288 residues: MGAPKQKWTSEEEDALRAGVRKHGAGKWRTIQKDPEFSPVLSSRSNIDLKDKWRNLSFSASGLGSSKLRVPKITGPSSSPSSSSQPLLLPAANKFTEATLPADAEKKPQDGKTLPKYGAMIMEALLELNEPNGSDIAAIFGFIEQRYAVQPTFRRFLASKLRRLADSNKIEKIDKSYRLPDSLATRTPAPMNASAPKQKDPSKPSKVSKAIGLFSASSPALEAAMAAAVKVADAEAKAHDAHDQTMEAERIFKMAEDTESLLIIAAEIYDRCSRGEITTLVPVAQREI.

3 disordered regions span residues 1 to 42 (MGAP…PVLS), 62 to 87 (GLGSSKLRVPKITGPSSSPSSSSQPL), and 181 to 206 (DSLATRTPAPMNASAPKQKDPSKPSK). An HTH myb-type domain is found at 1–60 (MGAPKQKWTSEEEDALRAGVRKHGAGKWRTIQKDPEFSPVLSSRSNIDLKDKWRNLSFSA). Positions 28 to 56 (WRTIQKDPEFSPVLSSRSNIDLKDKWRNL) form a DNA-binding region, H-T-H motif. Over residues 76–87 (PSSSPSSSSQPL) the composition is skewed to low complexity. Positions 113–181 (TLPKYGAMIM…KIDKSYRLPD (69 aa)) constitute an H15 domain. The stretch at 230–250 (KVADAEAKAHDAHDQTMEAER) forms a coiled coil.

This sequence belongs to the histone H1/H5 family. SMH subfamily. In terms of assembly, forms a homodimer and heterodimers.

The protein localises to the nucleus. Its subcellular location is the chromosome. It localises to the nucleolus. It is found in the telomere. Functionally, binds preferentially double-stranded telomeric repeats, but may also bind to the single telomeric strand. This chain is Single myb histone 4 (SMH4), found in Zea mays (Maize).